A 72-amino-acid polypeptide reads, in one-letter code: HADGVFTSDFSRLLGQLSAKKYLESLIXXXXXXXXXXXXXXXXXHSDAVFTDNYTRLRKQMAVKKYLNSILN.

The residue at position 27 (Ile-27) is an Isoleucine amide. Asn-72 bears the Asparagine amide mark.

The protein belongs to the glucagon family.

The protein localises to the secreted. Functionally, VIP is a neuropeptide involved in a diverse array of physiological processes through activating the PACAP subfamily of class B1 G protein-coupled receptors: VIP receptor 1 (VPR1) and VIP receptor 2 (VPR2). Abundantly expressed throughout the CNS and peripheral nervous systems where they primarily exert neuroprotective and immune modulatory roles. Also causes vasodilation, lowers arterial blood pressure, stimulates myocardial contractility, increases glycogenolysis and relaxes the smooth muscle of trachea, stomach and gall bladder. Its function is as follows. PHM-27 is a bioactive form from proteolysis of the same precursor protein, that causes vasodilation. It is a potent agonist of the calcitonin receptor CALCR, with similar efficacy as calcitonin. In Oryctolagus cuniculus (Rabbit), this protein is VIP peptides (VIP).